The following is a 256-amino-acid chain: Phosphoribosylaminoimidazole-succinocarboxamide synthase (256 aa).

A disordered region spans residues K234–R256. Basic residues predominate over residues A240–R256.

It belongs to the SAICAR synthetase family.

The catalysed reaction is 5-amino-1-(5-phospho-D-ribosyl)imidazole-4-carboxylate + L-aspartate + ATP = (2S)-2-[5-amino-1-(5-phospho-beta-D-ribosyl)imidazole-4-carboxamido]succinate + ADP + phosphate + 2 H(+). It participates in purine metabolism; IMP biosynthesis via de novo pathway; 5-amino-1-(5-phospho-D-ribosyl)imidazole-4-carboxamide from 5-amino-1-(5-phospho-D-ribosyl)imidazole-4-carboxylate: step 1/2. The polypeptide is Phosphoribosylaminoimidazole-succinocarboxamide synthase (Methanoregula boonei (strain DSM 21154 / JCM 14090 / 6A8)).